Here is a 221-residue protein sequence, read N- to C-terminus: Large ribosomal subunit protein uL4 (221 aa).

Positions 48–77 are disordered; that stretch reads TASTKTRGEVSGGGRKPWIQKHTGRARQGS.

The protein belongs to the universal ribosomal protein uL4 family. Part of the 50S ribosomal subunit.

Functionally, one of the primary rRNA binding proteins, this protein initially binds near the 5'-end of the 23S rRNA. It is important during the early stages of 50S assembly. It makes multiple contacts with different domains of the 23S rRNA in the assembled 50S subunit and ribosome. Its function is as follows. Forms part of the polypeptide exit tunnel. The sequence is that of Large ribosomal subunit protein uL4 from Thermosipho africanus (strain TCF52B).